The primary structure comprises 451 residues: D-inositol 3-phosphate glycosyltransferase (451 aa).

Position 37 (H37) interacts with 1D-myo-inositol 3-phosphate. UDP-N-acetyl-alpha-D-glucosamine-binding positions include 43–44 (QP) and G51. 1D-myo-inositol 3-phosphate-binding positions include 48-53 (DAGGMN), K106, Y138, T162, and R182. UDP-N-acetyl-alpha-D-glucosamine contacts are provided by R259, K264, and R323. Mg(2+) is bound by residues Y332, R333, and A335. E345 and E353 together coordinate UDP-N-acetyl-alpha-D-glucosamine. T359 is a binding site for Mg(2+).

It belongs to the glycosyltransferase group 1 family. MshA subfamily. As to quaternary structure, homodimer.

It carries out the reaction 1D-myo-inositol 3-phosphate + UDP-N-acetyl-alpha-D-glucosamine = 1D-myo-inositol 2-acetamido-2-deoxy-alpha-D-glucopyranoside 3-phosphate + UDP + H(+). Functionally, catalyzes the transfer of a N-acetyl-glucosamine moiety to 1D-myo-inositol 3-phosphate to produce 1D-myo-inositol 2-acetamido-2-deoxy-glucopyranoside 3-phosphate in the mycothiol biosynthesis pathway. This Corynebacterium kroppenstedtii (strain DSM 44385 / JCM 11950 / CIP 105744 / CCUG 35717) protein is D-inositol 3-phosphate glycosyltransferase.